A 155-amino-acid polypeptide reads, in one-letter code: 17.4 kDa class III heat shock protein (155 aa).

The 121-residue stretch at 35–155 (GRGSSNNIPI…KPKTVQIAVS (121 aa)) folds into the sHSP domain.

The protein belongs to the small heat shock protein (HSP20) family. As to quaternary structure, may form oligomeric structures.

It is found in the cytoplasm. This chain is 17.4 kDa class III heat shock protein (HSP17.4B), found in Arabidopsis thaliana (Mouse-ear cress).